Consider the following 371-residue polypeptide: Probable F-box protein At1g65740 (371 aa).

In terms of domain architecture, F-box spans 2-49; it reads VDWSTLPEELLHFIAARSFSLVEYKRFSSICVSWHSSVSGVKKNPFHR.

This Arabidopsis thaliana (Mouse-ear cress) protein is Probable F-box protein At1g65740.